Reading from the N-terminus, the 304-residue chain is Type II methyltransferase M.ScaI (304 aa).

This sequence belongs to the N(4)/N(6)-methyltransferase family. N(4) subfamily.

The catalysed reaction is a 2'-deoxycytidine in DNA + S-adenosyl-L-methionine = an N(4)-methyl-2'-deoxycytidine in DNA + S-adenosyl-L-homocysteine + H(+). In terms of biological role, a methylase that recognizes the double-stranded sequence 5'-AGTACT-3', methylates C-5 on both strands, and protects the DNA from cleavage by the ScaI endonuclease. The polypeptide is Type II methyltransferase M.ScaI (Streptomyces caespitosus).